The sequence spans 418 residues: MDATTIDLEQMGRAAKTAAMTLGQLTTLQKNTGLLAMAAALETHADTILAANKADLAAASALPEKFVDRLALTKARIADMAAGVRQVATLDDPTAQTDRAWVNEAGLTIAQKRVPLGVVGMIYEARPNVTVDAAALTFKSGNAVILRGGKEALHSNLALATVLQDALAAKGLPRDAVQLITDPSRAVATQMMHLNGYIDVLIPRGGKGLIKAVVEQATVPVIETGAGNCHIYVDAHAQLQMAVAIVVNAKVQRPSVCNAAEKLLIHADVANEQLPVIAKALQDHGVELRGDERARAIVPSMHAATAEDWDTEYNDLIMAVKVVDSEEEAIQHINAHNTKHSEAIITDNYQNSQQFLQQVDAAVVYVNASTRFTDGYEFGFGAEIGISTQKLHARGPMGLAALTTIKYQVLGNGQIRKN.

Belongs to the gamma-glutamyl phosphate reductase family.

The protein resides in the cytoplasm. The catalysed reaction is L-glutamate 5-semialdehyde + phosphate + NADP(+) = L-glutamyl 5-phosphate + NADPH + H(+). Its pathway is amino-acid biosynthesis; L-proline biosynthesis; L-glutamate 5-semialdehyde from L-glutamate: step 2/2. Functionally, catalyzes the NADPH-dependent reduction of L-glutamate 5-phosphate into L-glutamate 5-semialdehyde and phosphate. The product spontaneously undergoes cyclization to form 1-pyrroline-5-carboxylate. The sequence is that of Gamma-glutamyl phosphate reductase from Lacticaseibacillus casei (strain BL23) (Lactobacillus casei).